Here is a 676-residue protein sequence, read N- to C-terminus: UvrABC system protein B (676 aa).

Residues 35 to 192 (QGVADGLMYQ…ARLVAMQYTR (158 aa)) enclose the Helicase ATP-binding domain. An ATP-binding site is contributed by 48-55 (GVTGSGKT). Residues 101-124 (YYDYYQPEAYVPTRDLFIEKDSSV) carry the Beta-hairpin motif. One can recognise a Helicase C-terminal domain in the interval 439-605 (QVDDLLGEIR…GVNKAVRELI (167 aa)). The region spanning 634 to 669 (AREIKRLEKLMMDHARNLEFEQAAAARDALTALKNR) is the UVR domain.

This sequence belongs to the UvrB family. In terms of assembly, forms a heterotetramer with UvrA during the search for lesions. Interacts with UvrC in an incision complex.

The protein resides in the cytoplasm. Its function is as follows. The UvrABC repair system catalyzes the recognition and processing of DNA lesions. A damage recognition complex composed of 2 UvrA and 2 UvrB subunits scans DNA for abnormalities. Upon binding of the UvrA(2)B(2) complex to a putative damaged site, the DNA wraps around one UvrB monomer. DNA wrap is dependent on ATP binding by UvrB and probably causes local melting of the DNA helix, facilitating insertion of UvrB beta-hairpin between the DNA strands. Then UvrB probes one DNA strand for the presence of a lesion. If a lesion is found the UvrA subunits dissociate and the UvrB-DNA preincision complex is formed. This complex is subsequently bound by UvrC and the second UvrB is released. If no lesion is found, the DNA wraps around the other UvrB subunit that will check the other stand for damage. The protein is UvrABC system protein B of Bordetella avium (strain 197N).